The sequence spans 102 residues: Small ribosomal subunit protein uS10 (102 aa).

The protein belongs to the universal ribosomal protein uS10 family. Part of the 30S ribosomal subunit.

In terms of biological role, involved in the binding of tRNA to the ribosomes. This chain is Small ribosomal subunit protein uS10, found in Mycoplasma capricolum subsp. capricolum (strain California kid / ATCC 27343 / NCTC 10154).